Consider the following 1405-residue polypeptide: DNA-directed RNA polymerase subunit beta' (1405 aa).

Zn(2+)-binding residues include cysteine 70, cysteine 72, cysteine 85, and cysteine 88. Mg(2+)-binding residues include aspartate 460, aspartate 462, and aspartate 464. Positions 814, 888, 895, and 898 each coordinate Zn(2+).

Belongs to the RNA polymerase beta' chain family. As to quaternary structure, the RNAP catalytic core consists of 2 alpha, 1 beta, 1 beta' and 1 omega subunit. When a sigma factor is associated with the core the holoenzyme is formed, which can initiate transcription. Mg(2+) is required as a cofactor. The cofactor is Zn(2+).

It carries out the reaction RNA(n) + a ribonucleoside 5'-triphosphate = RNA(n+1) + diphosphate. Its function is as follows. DNA-dependent RNA polymerase catalyzes the transcription of DNA into RNA using the four ribonucleoside triphosphates as substrates. The protein is DNA-directed RNA polymerase subunit beta' of Shewanella sp. (strain ANA-3).